Consider the following 445-residue polypeptide: Rab GDP dissociation inhibitor beta (445 aa).

Met1 carries the post-translational modification N-acetylmethionine. The residue at position 57 (Lys57) is an N6-succinyllysine. N6-acetyllysine is present on Lys112. A Phosphoserine modification is found at Ser130. Lys269 is subject to N6-acetyllysine. At Ser382 the chain carries Phosphoserine.

This sequence belongs to the Rab GDI family. Interacts with RHOH. Interacts with the GDP-bound inactive forms of RAB3A, RAB3B, RAB3C, RAB5A, RAB5B, RAB5C, RAB8A, RAB8B, RAB10, RAB12, RAB35, and RAB43; binds RAB3D to a lesser extent. Interacts with DZIP1; this interaction negatively regulates the interaction of GDI2 with GDP-bound RAB8A. In terms of tissue distribution, ubiquitously expressed.

It is found in the cytoplasm. The protein localises to the membrane. It localises to the golgi apparatus. The protein resides in the trans-Golgi network. In terms of biological role, GDP-dissociation inhibitor preventing the GDP to GTP exchange of most Rab proteins. By keeping these small GTPases in their inactive GDP-bound form regulates intracellular membrane trafficking. Negatively regulates protein transport to the cilium and ciliogenesis through the inhibition of RAB8A. The sequence is that of Rab GDP dissociation inhibitor beta (GDI2) from Bos taurus (Bovine).